A 612-amino-acid chain; its full sequence is UPF0329 protein ECU05_1680/ECU11_0050 (612 aa).

A compositionally biased stretch (basic and acidic residues) spans 304-330; it reads RQRREMEKKEEEKKKEEEKKKEEEKRK. Residues 304-424 form a disordered region; sequence RQRREMEKKE…RKRYKIHRRV (121 aa). The span at 331–349 shows a compositional bias: basic residues; it reads EEKKKKKEEKKEEKKKKKE. The segment covering 350–388 has biased composition (basic and acidic residues); the sequence is EKKEEKKEEKKEEKKEEKKEEKKEEKKEEKSGKSLREGE.

The protein belongs to the UPF0329 family.

The chain is UPF0329 protein ECU05_1680/ECU11_0050 from Encephalitozoon cuniculi (strain GB-M1) (Microsporidian parasite).